We begin with the raw amino-acid sequence, 178 residues long: N-alpha-acetyltransferase 80 (178 aa).

Positions 26–178 (VPIHNYPELM…AKKKYMKKVL (153 aa)) constitute an N-acetyltransferase domain. Substrate contacts are provided by residues arginine 48, 53 to 56 (RMRS), asparagine 88, and serine 98. Acetyl-CoA contacts are provided by residues 99-101 (VVV) and 107-112 (GQGFGK). Serine 134 provides a ligand contact to substrate. Position 138 (glutamine 138) interacts with acetyl-CoA.

Belongs to the acetyltransferase family.

It catalyses the reaction N-terminal L-aspartyl-L-aspartyl-L-aspartyl-[protein] + acetyl-CoA = N-terminal N-acetyl-L-aspartyl-L-aspartyl-L-aspartyl-[protein] + CoA + H(+). It carries out the reaction N-terminal L-glutamyl-L-glutamyl-L-glutamyl-[protein] + acetyl-CoA = N-terminal N-acetyl-L-glutamyl-L-glutamyl-L-glutamyl-[protein] + CoA + H(+). Functionally, N-alpha-acetyltransferase that acetylates the amino terminal acidic residue of proteins devoid of initiator methionine. Preferentially acts on proteins starting with Asp-Asp-Asp and Glu-Glu-Glu sequences. In vitro, shows high activity towards N-terminal sequences starting with Met-Asp-Glu-Leu, Met-Glu-Glu-Glu and Met-Asp-Asp-Asp. This Drosophila melanogaster (Fruit fly) protein is N-alpha-acetyltransferase 80.